Reading from the N-terminus, the 84-residue chain is Kappa-scoloptoxin(11)-Ssm3a (84 aa).

The N-terminal stretch at 1 to 16 is a signal peptide; that stretch reads MSWMFYSFIVFTLAIK.

It belongs to the scoloptoxin-11 family. Post-translationally, contains 2 disulfide bonds. Expressed by the venom gland.

Its subcellular location is the secreted. Its function is as follows. Inhibits voltage-gated potassium channel currents in DRG neurons. 200 nM of the toxin inhibits current amplitude by only 25% and even at concentrations up to 5 uM, the toxin does not inhibit all potassium currents. In vivo, insects injected with this toxin showed signs of neurotoxicity including twitching, paralysis, and body contraction. The protein is Kappa-scoloptoxin(11)-Ssm3a of Scolopendra mutilans (Chinese red-headed centipede).